Reading from the N-terminus, the 285-residue chain is MKVRCVSLVAAGLLTIAGSAIGQPAPAPMPAMAPAAKPAMNTPVDRAKILSAPGVFVAFSTYKIRPDYFKVALAERKGAADEVMAVLEKHKEKVIVDAYLTRGYEAKSDYFLRVHAYDAVAAQAFLVDFRATRFGMYSDVTESLVGITKALNYISKDKSPDLNKGLSGATYAGDAPRFAFMIPVKKNADWWNLTDEQRLKEMETHTLPTLPFLVNVKRKLYHSTGLDDTDFITYFETNDLGAFNNLMLSLAKVPENKYHVRWGNPTVLGTIQPIENLVKTLSMGN.

Residues 1–38 form the signal peptide; that stretch reads MKVRCVSLVAAGLLTIAGSAIGQPAPAPMPAMAPAAKP. Glutamate 105 is a binding site for Ca(2+). A heme-binding site is contributed by histidine 205. The active-site Proton acceptor is the arginine 218. 2 residues coordinate Ca(2+): aspartate 227 and threonine 266.

Belongs to the chlorite dismutase family. In terms of assembly, homopentamer. The cofactor is heme b.

It localises to the periplasm. The catalysed reaction is chloride + O2 = chlorite. Its function is as follows. Catalyzes the heme-dependent decomposition of chlorite to O(2) and chloride with high efficiency and specificity. Used to detoxify chlorite, a by-product of the reduction of perchlorate, a primarily anthropogenic pollutant, in perchlorate-respiring bacteria. The polypeptide is Chlorite dismutase (cld) (Ideonella dechloratans).